A 1072-amino-acid polypeptide reads, in one-letter code: MTSLLGLAVRLLLFQPALMVFWASQVRQNCRNGSYEISVLMMDNSAYKEPMQNLREAVEEGLDIVRKRLREADLNVTVNATFIYSDGLIHKSGDCRSSTCEGLDLLREITRDHKMGCALMGPSCTYSTFQMYLDTELNYPMISAGSYGLSCDYKETLTRILPPARKLMYFLVDFWKVNNASFKPFSWNSSYVYKNGSEPEDCFWYLNALEAGVSYFSEVLNFKDVLRRSEQFQEILTGHNRKSNVIVMCGTPESFYDVKGDLQVAEDTVVILVDLFSNHYFEENTTAPEYMDNVLVLTLPSEQSTSNTSVAERFSSGRSDFSLAYLEGTLLFGHMLQTFLENGENVTGPKFARAFRNLTFQGFAGPVTLDDSGDIDNIMSLLYVSLDTRKYKVLMKYDTHKNKTIPVAENPNFIWKNHKLPNDVPGLGPQILMIAVFTLTGILVVLLLIALLVLRKYRRDHALRQKKWSHIPSENIFPLETNETNHISLKIDDDRRRDTIQRVRQCKYDKKKVILKDLKHSDGNFSEKQKIDLNKLLQSDYYNLTKFYGTVKLDTRIFGVVEYCERGSLREVLNDTISYPDGTFMDWEFKISVLNDIAKGMSYLHSSKIEVHGRLKSTNCVVDSRMVVKITDFGCNSILPPKKDLWTAPEHLRQATISQKGDVYSFAIIAQEIILRKETFYTLSCRDHNEKIFRVENSYGKPFRPDLFLETADEKELEVYLLVKSCWEEDPEKRPDFKKIESTLAKIFGLFHDQKNESYMDTLIRRLQLYSRNLEHLVEERTQLYKAERDRADHLNFMLLPRLVVKSLKEKGIVEPELYEEVTIYFSDIVGFTTICKYSTPMEVVDMLNDIYKSFDQIVDHHDVYKVETIGDAYVVASGLPMRNGNRHAVDISKMALDILSFIGTFELEHLPGLPVWIRIGVHSGPCAAGVVGIKMPRYCLFGDTVNTASRMESTGLPLRIHMSSSTITILKRTDCQFLYEVRGETYLKGRGTETTYWLTGMKDQEYNLPSPPTVENQQRLQTEFSDMIVSALQKRQASGKKSRRPTRVASYKKGFLEYMQLNNSDHDSTYF.

The signal sequence occupies residues M1–M19. The Extracellular segment spans residues V20–M433. 10 N-linked (GlcNAc...) asparagine glycosylation sites follow: N32, N75, N79, N179, N188, N195, N284, N307, N345, and N402. Residues I434 to L454 traverse the membrane as a helical segment. Over R455–F1072 the chain is Cytoplasmic. One can recognise a Protein kinase domain in the interval L489–F748. Residues T823–E953 enclose the Guanylate cyclase domain.

Belongs to the adenylyl cyclase class-4/guanylyl cyclase family. Homotrimer. Interacts via its C-terminal region with NHERF4. Interacts with the lectin chaperone VIP36. Glycosylation at Asn-75 and/or Asn-79 is required for interaction with VIP36 while glycosylation at Asn-345 and Asn-402 modulates ligand-mediated GC-C activation.

The protein localises to the cell membrane. It is found in the endoplasmic reticulum membrane. It carries out the reaction GTP = 3',5'-cyclic GMP + diphosphate. Functionally, guanylyl cyclase that catalyzes synthesis of cyclic GMP (cGMP) from GTP. This Mus musculus (Mouse) protein is Guanylyl cyclase C (Gucy2c).